Reading from the N-terminus, the 446-residue chain is Ribulose bisphosphate carboxylase large chain (446 aa).

Residues Asn89 and Thr139 each coordinate substrate. Lys141 acts as the Proton acceptor in catalysis. Lys143 contacts substrate. The Mg(2+) site is built by Lys167, Asp169, and Glu170. Position 167 is an N6-carboxylysine (Lys167). The Proton acceptor role is filled by His260. 3 residues coordinate substrate: Arg261, His293, and Ser345.

It belongs to the RuBisCO large chain family. Type I subfamily. As to quaternary structure, heterohexadecamer of 8 large chains and 8 small chains; disulfide-linked. The disulfide link is formed within the large subunit homodimers. It depends on Mg(2+) as a cofactor. In terms of processing, the disulfide bond which can form in the large chain dimeric partners within the hexadecamer appears to be associated with oxidative stress and protein turnover.

Its subcellular location is the plastid. It is found in the chloroplast. The catalysed reaction is 2 (2R)-3-phosphoglycerate + 2 H(+) = D-ribulose 1,5-bisphosphate + CO2 + H2O. The enzyme catalyses D-ribulose 1,5-bisphosphate + O2 = 2-phosphoglycolate + (2R)-3-phosphoglycerate + 2 H(+). RuBisCO catalyzes two reactions: the carboxylation of D-ribulose 1,5-bisphosphate, the primary event in carbon dioxide fixation, as well as the oxidative fragmentation of the pentose substrate in the photorespiration process. Both reactions occur simultaneously and in competition at the same active site. The polypeptide is Ribulose bisphosphate carboxylase large chain (Exacum affine (Persian violet)).